Reading from the N-terminus, the 216-residue chain is Ethylene-inducing xylanase (216 aa).

The first 19 residues, 1–19 (MVSFSSLFVAACAAVTAFA), serve as a signal peptide directing secretion. The 189-residue stretch at 28-216 (AITTSQQGTS…SSGSSDITVS (189 aa)) folds into the GH11 domain. Glu-112 serves as the catalytic Nucleophile. The active-site Proton donor is the Glu-203.

Belongs to the glycosyl hydrolase 11 (cellulase G) family.

The protein localises to the secreted. The enzyme catalyses Endohydrolysis of (1-&gt;4)-beta-D-xylosidic linkages in xylans.. It functions in the pathway glycan degradation; xylan degradation. Its function is as follows. Endo-1,4-beta-xylanase involved in the hydrolysis of xylan, a major structural heterogeneous polysaccharide found in plant biomass representing the second most abundant polysaccharide in the biosphere, after cellulose. Acts as a pathogen-associated molecular pattern (PAMP) that can trigger plant cell death. Triggers a series of immune responses in citrus fruit and enhanced the resistance of citrus and other fruit against fungal pathogens. The protein is Ethylene-inducing xylanase of Penicillium digitatum (strain Pd1 / CECT 20795) (Green mold).